We begin with the raw amino-acid sequence, 428 residues long: Phosphomethylpyrimidine synthase (428 aa).

Residues Asn66, Met95, Tyr124, His163, 185 to 187 (SRG), 226 to 229 (DGLR), and Glu265 each bind substrate. His269 is a binding site for Zn(2+). Residue Tyr292 participates in substrate binding. His333 is a Zn(2+) binding site. Positions 407, 410, and 414 each coordinate [4Fe-4S] cluster.

This sequence belongs to the ThiC family. It depends on [4Fe-4S] cluster as a cofactor.

The catalysed reaction is 5-amino-1-(5-phospho-beta-D-ribosyl)imidazole + S-adenosyl-L-methionine = 4-amino-2-methyl-5-(phosphooxymethyl)pyrimidine + CO + 5'-deoxyadenosine + formate + L-methionine + 3 H(+). It participates in cofactor biosynthesis; thiamine diphosphate biosynthesis. Functionally, catalyzes the synthesis of the hydroxymethylpyrimidine phosphate (HMP-P) moiety of thiamine from aminoimidazole ribotide (AIR) in a radical S-adenosyl-L-methionine (SAM)-dependent reaction. The sequence is that of Phosphomethylpyrimidine synthase from Thermococcus kodakarensis (strain ATCC BAA-918 / JCM 12380 / KOD1) (Pyrococcus kodakaraensis (strain KOD1)).